A 97-amino-acid polypeptide reads, in one-letter code: Putative membrane protein insertion efficiency factor (97 aa).

The tract at residues 77 to 97 (VPDAPASPSPSSSCSCKGPHP) is disordered. Over residues 85–97 (SPSSSCSCKGPHP) the composition is skewed to low complexity.

This sequence belongs to the UPF0161 family.

It is found in the cell inner membrane. In terms of biological role, could be involved in insertion of integral membrane proteins into the membrane. This is Putative membrane protein insertion efficiency factor from Xanthomonas euvesicatoria pv. vesicatoria (strain 85-10) (Xanthomonas campestris pv. vesicatoria).